Consider the following 343-residue polypeptide: Autoinducer 2 import system permease protein LsrC (343 aa).

The next 9 membrane-spanning stretches (helical) occupy residues phenylalanine 13 to phenylalanine 33, methionine 38 to leucine 58, asparagine 61 to leucine 81, leucine 92 to leucine 112, isoleucine 114 to tryptophan 134, valine 154 to tryptophan 174, isoleucine 212 to proline 232, glycine 251 to leucine 271, and leucine 283 to aspartate 303. The disordered stretch occupies residues arginine 321–alanine 343.

This sequence belongs to the binding-protein-dependent transport system permease family. AraH/RbsC subfamily. The complex is composed of two ATP-binding proteins (LsrA), two transmembrane proteins (LsrC and LsrD) and a solute-binding protein (LsrB).

The protein localises to the cell inner membrane. Its function is as follows. Part of the ABC transporter complex LsrABCD involved in autoinducer 2 (AI-2) import. Probably responsible for the translocation of the substrate across the membrane. The sequence is that of Autoinducer 2 import system permease protein LsrC (lsrC) from Enterobacter sp. (strain 638).